The following is a 130-amino-acid chain: Small ribosomal subunit protein uS8 (130 aa).

This sequence belongs to the universal ribosomal protein uS8 family.

The sequence is that of Small ribosomal subunit protein uS8 (RPS22) from Kluyveromyces marxianus (Yeast).